The primary structure comprises 459 residues: MAFYSYNSFLAIFWTRLPGHSVHPPCSHFPPLAFFHLPDSHLRTAYMKNCGSRKYSYPGLTGNNKVHPLRTRLPQKLHTTCWLQNHPGKPQPEQIPEEPKATDPQPTKDDQTEVAEGKWSLRQKIIDEVKYYYNGFSLLWIDTKVAARIVWRLLHGQVLTRRERRRLLRTCADVFRLVPFVVFIIVPFMEFLIPVFLKLFPDMLPSTFESESKKEEKQKKMMGAKLEIAKFLQETMTEMAKRNRAKLDDDSSDSSQLSSYVKQVQTGHKPSTKEIVRFSKLFEDQLALEHLRRPQLVALCKLLELQAFGTNNLLRFQLLMTLRSIKADDEVIAKEGVKALSVSELQAACRARGMRSLGLTEEQLRQQLTEWLDLHLKENVPPSLLLLSRTFYLIDVKPKPIELPPSIETPKTNLGIPSSPPPESKEDITDPAPQLNGTKILQAKSQETSQNSKANSKGA.

A mitochondrion-targeting transit peptide spans 1 to 25 (MAFYSYNSFLAIFWTRLPGHSVHPP). Over 26–176 (CSHFPPLAFF…LLRTCADVFR (151 aa)) the chain is Mitochondrial intermembrane. The segment at 88 to 114 (GKPQPEQIPEEPKATDPQPTKDDQTEV) is disordered. Positions 97–111 (EEPKATDPQPTKDDQ) are enriched in basic and acidic residues. The chain crosses the membrane as a helical span at residues 177–197 (LVPFVVFIIVPFMEFLIPVFL). Residues 198–459 (KLFPDMLPST…QNSKANSKGA (262 aa)) are Mitochondrial matrix-facing. The Letm1 RBD domain maps to 220-440 (KMMGAKLEIA…PAPQLNGTKI (221 aa)). The tract at residues 403–459 (LPPSIETPKTNLGIPSSPPPESKEDITDPAPQLNGTKILQAKSQETSQNSKANSKGA) is disordered. Polar residues predominate over residues 435–459 (LNGTKILQAKSQETSQNSKANSKGA).

Testis and sperm.

The protein resides in the mitochondrion inner membrane. This chain is LETM1 domain-containing protein LETM2, mitochondrial (Letm2), found in Rattus norvegicus (Rat).